The sequence spans 766 residues: Protein translocase subunit SecA 2 (766 aa).

ATP contacts are provided by residues glutamine 84, 102-106 (GEGKT), and aspartate 490.

The protein belongs to the SecA family. Monomer and homodimer. Part of the essential Sec protein translocation apparatus which comprises SecA, SecYEG and auxiliary proteins SecDF. Other proteins may also be involved.

Its subcellular location is the cell membrane. It is found in the cytoplasm. The enzyme catalyses ATP + H2O + cellular proteinSide 1 = ADP + phosphate + cellular proteinSide 2.. In terms of biological role, part of the Sec protein translocase complex. Interacts with the SecYEG preprotein conducting channel. Has a central role in coupling the hydrolysis of ATP to the transfer of proteins into and across the cell membrane, serving as an ATP-driven molecular motor driving the stepwise translocation of polypeptide chains across the membrane. This chain is Protein translocase subunit SecA 2, found in Thermobifida fusca (strain YX).